The chain runs to 386 residues: Acetate kinase (386 aa).

Asn-7 provides a ligand contact to Mg(2+). Position 14 (Lys-14) interacts with ATP. A substrate-binding site is contributed by Arg-78. Asp-135 serves as the catalytic Proton donor/acceptor. Residues 195–199, 268–270, and 316–320 contribute to the ATP site; these read HLGNG, DMR, and GIGEN. Glu-370 contacts Mg(2+).

This sequence belongs to the acetokinase family. As to quaternary structure, homodimer. Mg(2+) is required as a cofactor. The cofactor is Mn(2+).

It localises to the cytoplasm. It catalyses the reaction acetate + ATP = acetyl phosphate + ADP. The protein operates within metabolic intermediate biosynthesis; acetyl-CoA biosynthesis; acetyl-CoA from acetate: step 1/2. In terms of biological role, catalyzes the formation of acetyl phosphate from acetate and ATP. Can also catalyze the reverse reaction. The chain is Acetate kinase from Arthrobacter sp. (strain FB24).